Reading from the N-terminus, the 88-residue chain is U-scoloptoxin(01)-Tl1a (88 aa).

An N-terminal signal peptide occupies residues M1–A16. Residues G25–R81 enclose the Chitin-binding type-2 domain. C58 and C71 are oxidised to a cystine.

The protein belongs to the scoloptoxin-01 family. Contains 3 disulfide bonds. As to expression, expressed by the venom gland.

Its subcellular location is the secreted. The chain is U-scoloptoxin(01)-Tl1a from Thereuopoda longicornis (Long-legged centipede).